The primary structure comprises 74 residues: Protein SlyX homolog (74 aa).

This sequence belongs to the SlyX family.

This chain is Protein SlyX homolog, found in Aliivibrio salmonicida (strain LFI1238) (Vibrio salmonicida (strain LFI1238)).